Reading from the N-terminus, the 194-residue chain is Small ribosomal subunit protein uS5 (194 aa).

The S5 DRBM domain maps to 26-89 (LEEKVVEIRR…ADAKKHLIRV (64 aa)).

The protein belongs to the universal ribosomal protein uS5 family. Part of the 30S ribosomal subunit. Contacts proteins S4 and S8.

With S4 and S12 plays an important role in translational accuracy. Its function is as follows. Located at the back of the 30S subunit body where it stabilizes the conformation of the head with respect to the body. The sequence is that of Small ribosomal subunit protein uS5 from Persephonella marina (strain DSM 14350 / EX-H1).